The following is a 360-amino-acid chain: Photosystem II protein D1 (360 aa).

A run of 3 helical transmembrane segments spans residues 29–46, 118–133, and 142–156; these read YIGW…TATS, HFLL…EWEL, and WISV…AAAA. His-118 lines the chlorophyll a pocket. Tyr-126 contributes to the pheophytin a binding site. [CaMn4O5] cluster-binding residues include Asp-170 and Glu-189. A helical membrane pass occupies residues 197–218; the sequence is FHQLGVAGVFGGSLFSAMHGSL. Residue His-198 coordinates chlorophyll a. A quinone contacts are provided by residues His-215 and 264–265; that span reads SF. His-215 is a Fe cation binding site. Position 272 (His-272) interacts with Fe cation. Residues 274-288 traverse the membrane as a helical segment; the sequence is FLGAWPVVGIWLTSM. Residues His-332, Glu-333, Asp-342, and Ala-344 each coordinate [CaMn4O5] cluster. A propeptide spanning residues 345–360 is cleaved from the precursor; sequence SGDSCPVALVAPSING.

This sequence belongs to the reaction center PufL/M/PsbA/D family. PSII is composed of 1 copy each of membrane proteins PsbA, PsbB, PsbC, PsbD, PsbE, PsbF, PsbH, PsbI, PsbJ, PsbK, PsbL, PsbM, PsbT, PsbX, PsbY, PsbZ, Psb30/Ycf12, at least 3 peripheral proteins of the oxygen-evolving complex and a large number of cofactors. It forms dimeric complexes. Requires The D1/D2 heterodimer binds P680, chlorophylls that are the primary electron donor of PSII, and subsequent electron acceptors. It shares a non-heme iron and each subunit binds pheophytin, quinone, additional chlorophylls, carotenoids and lipids. D1 provides most of the ligands for the Mn4-Ca-O5 cluster of the oxygen-evolving complex (OEC). There is also a Cl(-1) ion associated with D1 and D2, which is required for oxygen evolution. The PSII complex binds additional chlorophylls, carotenoids and specific lipids. as cofactor. Tyr-161 forms a radical intermediate that is referred to as redox-active TyrZ, YZ or Y-Z. Post-translationally, C-terminally processed by CTPA; processing is essential to allow assembly of the oxygen-evolving complex and thus photosynthetic growth.

The protein resides in the plastid. Its subcellular location is the chloroplast thylakoid membrane. It catalyses the reaction 2 a plastoquinone + 4 hnu + 2 H2O = 2 a plastoquinol + O2. Photosystem II (PSII) is a light-driven water:plastoquinone oxidoreductase that uses light energy to abstract electrons from H(2)O, generating O(2) and a proton gradient subsequently used for ATP formation. It consists of a core antenna complex that captures photons, and an electron transfer chain that converts photonic excitation into a charge separation. The D1/D2 (PsbA/PsbD) reaction center heterodimer binds P680, the primary electron donor of PSII as well as several subsequent electron acceptors. The chain is Photosystem II protein D1 from Palmaria palmata (Dulse).